We begin with the raw amino-acid sequence, 362 residues long: Tyrosine recombinase XerH (362 aa).

The region spanning 43–140 (ECLNELNQAC…ALLGLFSYID (98 aa)) is the Core-binding (CB) domain. The Tyr recombinase domain occupies 170 to 357 (KLPTHLNNEE…DKQRLEEAAS (188 aa)). Residues R213, K239, H309, R312, and H335 contribute to the active site. Y344 serves as the catalytic O-(3'-phospho-DNA)-tyrosine intermediate.

It belongs to the 'phage' integrase family. XerH subfamily.

It localises to the cytoplasm. Its activity is regulated as follows. FtsK is required for recombination. In terms of biological role, site-specific tyrosine recombinase, which acts by catalyzing the cutting and rejoining of the recombining DNA molecules. Involved in chromosome segregation. May contribute to chromosome decatenation. The sequence is that of Tyrosine recombinase XerH from Helicobacter pylori (strain ATCC 700392 / 26695) (Campylobacter pylori).